Reading from the N-terminus, the 147-residue chain is Large ribosomal subunit protein bL9 (147 aa).

The protein belongs to the bacterial ribosomal protein bL9 family.

Its function is as follows. Binds to the 23S rRNA. The sequence is that of Large ribosomal subunit protein bL9 from Caldanaerobacter subterraneus subsp. tengcongensis (strain DSM 15242 / JCM 11007 / NBRC 100824 / MB4) (Thermoanaerobacter tengcongensis).